A 118-amino-acid chain; its full sequence is Cytochrome c oxidase assembly protein COX20, mitochondrial (118 aa).

At Ala2 the chain carries N-acetylalanine. The Mitochondrial intermembrane portion of the chain corresponds to 2-33; that stretch reads AAPPEPGEPEERKSLKLLGFLDVENTPCARHS. Residues 34–51 traverse the membrane as a helical segment; the sequence is ILYGSLGSVVAGFGHFLF. Residues 52-60 are Mitochondrial matrix-facing; that stretch reads TSRIRRSCD. A helical membrane pass occupies residues 61-77; the sequence is VGVGGFILVTLGCWFHC. Residues 78 to 118 lie on the Mitochondrial intermembrane side of the membrane; that stretch reads RYNYAKQRIQERIAREEIKKKILYEGTHLDPERKHNGSSSN.

The protein belongs to the COX20 family. Found in a complex with TMEM177, COA6, MT-CO2/COX2, COX18, SCO1 and SCO2. Interacts with SCO1, SCO2 and COA6 in a MT-CO2/COX2- and COX18-dependent manner. Interacts with COX18 in a MT-CO2/COX2-dependent manner. Interacts with MT-CO2/COX2. Interacts with TMEM177.

Its subcellular location is the mitochondrion inner membrane. Its function is as follows. Essential for the assembly of the mitochondrial respiratory chain complex IV (CIV), also known as cytochrome c oxidase. Acts as a chaperone in the early steps of cytochrome c oxidase subunit II (MT-CO2/COX2) maturation, stabilizing the newly synthesized protein and presenting it to metallochaperones SCO1/2 which in turn facilitates the incorporation of the mature MT-CO2/COX2 into the assembling CIV holoenzyme. The protein is Cytochrome c oxidase assembly protein COX20, mitochondrial (COX20) of Homo sapiens (Human).